We begin with the raw amino-acid sequence, 76 residues long: Gas vesicle protein A1 (76 aa).

2 binds to GvpF1 regions span residues 1 to 22 and 2 to 43; these read MAQP…KGVV and AQPD…EARV. The interval 9–19 is alpha helix 1; it reads LAEVLDRVLDK. The tract at residues 23–31 is beta-strand 1; it reads VDVWARVSL. Residues 32–34 are beta turn; it reads VGI. The interval 35–43 is beta-strand 2; that stretch reads EILTVEARV. Residues 48-67 form an alpha helix 2 region; that stretch reads VDTFLHYAEEIAKIEQAELT.

This sequence belongs to the gas vesicle GvpA family. As to quaternary structure, major component of the gas vesicle shell which is 2 nm thick and consists of a single layer of the protein. It forms 4.6 nm-wide ribs nearly perpendicular to the long axis of the vesicle. Modeled as antiparallel homodimers. The ribs form a low-pitch helix rather than a stack of hoops. Interacts with GvpF1 via its N-terminus (residues 1-43) in early growth stages, none of the other GvpG1 to GvpM1 proteins were seen to directly bind GvpA1 in H.volcanii experiments. Might interact with GvpJ1. Might interact with GvpG1, GvpH1, GvpJ1, GvpM1, GvpN1 and GvpO1.

Its subcellular location is the gas vesicle shell. In terms of biological role, gas vesicles are hollow, gas filled proteinaceous nanostructures found in several microbial planktonic microorganisms. They allow positioning of halobacteria at the optimal depth for growth in the poorly aerated shallow brine pools of their habitat. GvpA forms the protein shell. The critical collapse pressure (CCP) of p-vac gas vesicles is 0.66 MPa; mutating residues in p-gvpA to those found in c-gvpA increases the CCP. These residues partially and independently control the width and strength of gas vesicles. In stationary phase gas vesicles, about 30 times more GvpA1 is found than GvpA2. Functionally, expression of a 9.5 kb p-vac DNA fragment containing 2 divergently transcribed regions (gvpD-gvpE-gvpF-gvpG-gvpH-gvpI-gvpJ-gvpK-gvpL-gvpM and gvpA-gvpC-gvpN-gvpO) allows H.volcanii to produce gas vesicles. All site-directed mutagenesis is tested in H.volcanii. A minimal gas vesicle can be made in H.volcanii by gvpA1-gvpO1 plus gvpF1-gvpG1-gvpJ1-gvpK1-gvpL1-gvpM1; lack of enough GvpJ1 prevents their formation. A similar region restores gas vesicle production in H.halobium without the p-vac locus, but it still has the c-vac locus. The protein is Gas vesicle protein A1 of Halobacterium salinarum (strain ATCC 700922 / JCM 11081 / NRC-1) (Halobacterium halobium).